The chain runs to 645 residues: Sodium-dependent phosphate transporter 2 (645 aa).

The Extracellular portion of the chain corresponds to 1–5 (MAMDE). A helical membrane pass occupies residues 6-26 (YLWMVILGFIIAFILAFSVGA). Residues 27-46 (NDVANSFGTAVGSGVVTLRQ) lie on the Cytoplasmic side of the membrane. A helical transmembrane segment spans residues 47–67 (ACILASIFETTGSVLLGAKVG). The Extracellular segment spans residues 68-86 (ETIRKGIIDVNLYNNTVET). The N-linked (GlcNAc...) asparagine glycan is linked to Asn-81. A helical transmembrane segment spans residues 87 to 107 (LMAGEVSAMVGSAVWQLIASF). At 108–109 (LR) the chain is on the cytoplasmic side. Residues 110-130 (FPISGTHCIVGATIGFSLVAI) form a helical membrane-spanning segment. The Extracellular portion of the chain corresponds to 131-142 (GTQGVQWMELVK). A helical membrane pass occupies residues 143-163 (IVASWFISPLLSGFMSGVLFV). Over 164 to 190 (LIRMFILKKEDPVPNGLRALPVFYAAT) the chain is Cytoplasmic. The chain crosses the membrane as a helical span at residues 191–211 (IAINVFSIMYTGAPVMGLVLP). Topologically, residues 212–213 (MW) are extracellular. Residues 214 to 234 (AIALISFGVALLFALFVWLFV) form a helical membrane-spanning segment. The Cytoplasmic segment spans residues 235–475 (CPWMRRKITG…EEKEEKDSPE (241 aa)). Ser-253, Ser-256, Ser-259, Ser-268, Ser-316, and Ser-379 each carry phosphoserine. Positions 275–320 (PGAKAHDDSTVPLTGSAADPSGTSESMSGGHHPRAPYGRALSMTHG) are disordered. Positions 448–471 (RLAPPLAEPEPPRDDPADEEKEEK) are disordered. The helical transmembrane segment at 476 to 496 (VHLLFHFLQVLTACFGSFAHG) threads the bilayer. Topologically, residues 497 to 523 (GNDVSNAIGPLVALWLIYEQGAVLQEA) are extracellular. A helical transmembrane segment spans residues 524 to 544 (ATPVWLLFYGGVGICTGLWVW). Topologically, residues 545 to 564 (GRRVIQTMGKDLTPITPSSG) are cytoplasmic. Residues 565-579 (FTIELASAFTVVIAS) traverse the membrane as a helical segment. Topologically, residues 580-586 (NIGLPVS) are extracellular. The chain crosses the membrane as a helical span at residues 587–602 (TTHCKVGSVVAVGWIR). Residues 603–614 (SRKAVDWRLFRN) lie on the Cytoplasmic side of the membrane. The helical transmembrane segment at 615 to 635 (IFVAWFVTVPVAGLFSAAIMA) threads the bilayer. At 636–645 (LLIHGILPFV) the chain is on the extracellular side.

The protein belongs to the inorganic phosphate transporter (PiT) (TC 2.A.20) family. In terms of assembly, homodimer.

The protein resides in the cell membrane. It localises to the apical cell membrane. It catalyses the reaction 2 Na(+)(out) + phosphate(out) = 2 Na(+)(in) + phosphate(in). Sodium-phosphate symporter which preferentially transports the monovalent form of phosphate with a stoichiometry of two sodium ions per phosphate ion. Plays a critical role in the determination of bone quality and strength by providing phosphate for bone mineralization. Required to maintain normal cerebrospinal fluid phosphate levels. Mediates phosphate-induced calcification of vascular smooth muscle cells (VCMCs) and can functionally compensate for loss of SLC20A1 in VCMCs. In Bos taurus (Bovine), this protein is Sodium-dependent phosphate transporter 2 (SLC20A2).